The chain runs to 78 residues: Disintegrin DisBa-01 (78 aa).

In terms of domain architecture, Disintegrin spans 1 to 78; sequence GNELLEAGEE…AGCPRNPFHA (78 aa). 6 disulfide bridges follow: C11/C26, C13/C21, C20/C43, C34/C40, C39/C64, and C52/C71. Residues 56-58 carry the Cell attachment site motif; it reads RGD.

This sequence belongs to the venom metalloproteinase (M12B) family. P-II subfamily. P-IIa sub-subfamily. Monomer. As to expression, expressed by the venom gland.

It localises to the secreted. This recombinant disintegrin antagonizes integrins alpha-IIb/beta-3 (ITGA2B/ITGB3) and alpha-V/beta-3 (ITGAV/ITGB3). On ITGA2B/ITGB3, it interferes with the outside/-in phosphorylation of the focal adhesion kinase (PTK2 / FAK) downstream of the integrin. It strongly inhibits platelet aggregation induced by ADP, thrombin, and collagen, abolishes and reverses dynamic platelet recruitment to immobilized fibrinogen. In vivo, it induces a dramatic increase in the tail bleeding time, and has a strong antithrombotic activity. On ITGAV/ITGB3, it inhibits the adhesion of ITGAV/ITGB3-expressing human microvascular endothelial cell line and murine melanoma cell line to vitronectin (IC(50) are 555 nM and 225 nM, respectively), and transiently inhibits their proliferation without direct cell toxicity. In vivo, it potently inhibits angiogenesis and metastasis, probably due to its capability to strongly inhibit the expression of VEGF and its receptors in endothelial cells. It also inhibits tumor cell migration in vitro. The protein is Disintegrin DisBa-01 of Bothrops alternatus (Urutu).